A 1128-amino-acid chain; its full sequence is Probable serine/threonine-protein kinase DDB_G0283337 (1128 aa).

Residues 1 to 17 (MENNNNNNINKTNTPNN) are compositionally biased toward low complexity. Disordered regions lie at residues 1 to 21 (MENNNNNNINKTNTPNNSFSP), 60 to 100 (INHN…NNNN), 131 to 151 (RESNSNNNSNNSNININNNSN), 236 to 256 (NNSKEDCNSSNNSYDNDSNSN), and 375 to 504 (NDNE…NSEQ). Composition is skewed to low complexity over residues 243 to 256 (NSSNNSYDNDSNSN) and 375 to 502 (NDNE…NNNS). One can recognise a Protein kinase domain in the interval 777 to 1054 (LSDFSIIGEG…EIQKCKEEYE (278 aa)). Residues 783–791 (IGEGGFSTV) and lysine 809 contribute to the ATP site. Aspartate 904 functions as the Proton acceptor in the catalytic mechanism.

Belongs to the protein kinase superfamily. Ser/Thr protein kinase family.

The catalysed reaction is L-seryl-[protein] + ATP = O-phospho-L-seryl-[protein] + ADP + H(+). It carries out the reaction L-threonyl-[protein] + ATP = O-phospho-L-threonyl-[protein] + ADP + H(+). The protein is Probable serine/threonine-protein kinase DDB_G0283337 of Dictyostelium discoideum (Social amoeba).